A 146-amino-acid polypeptide reads, in one-letter code: Protein archease (146 aa).

Ca(2+) is bound by residues aspartate 16, aspartate 145, and isoleucine 146.

This sequence belongs to the archease family.

Its function is as follows. Activates the tRNA-splicing ligase complex by facilitating the enzymatic turnover of catalytic subunit RtcB. Acts by promoting the guanylylation of RtcB, a key intermediate step in tRNA ligation. Can also alter the NTP specificity of RtcB such that ATP, dGTP or ITP is used efficiently. The polypeptide is Protein archease (Methanosarcina barkeri (strain Fusaro / DSM 804)).